Consider the following 217-residue polypeptide: Large ribosomal subunit protein uL4 (217 aa).

Residues 46–103 (KRQGTHATKTRGMVSGGGRKPFRQKGTGRARQGSIRAPHFTGGGTVHGPQPRDYSQRT) form a disordered region.

Belongs to the universal ribosomal protein uL4 family. Part of the 50S ribosomal subunit.

In terms of biological role, one of the primary rRNA binding proteins, this protein initially binds near the 5'-end of the 23S rRNA. It is important during the early stages of 50S assembly. It makes multiple contacts with different domains of the 23S rRNA in the assembled 50S subunit and ribosome. Functionally, forms part of the polypeptide exit tunnel. This chain is Large ribosomal subunit protein uL4, found in Corynebacterium jeikeium (strain K411).